A 765-amino-acid polypeptide reads, in one-letter code: Phosphoribosylformylglycinamidine synthase subunit PurL (765 aa).

A compositionally biased stretch (polar residues) spans 1–13 (MTVSPTSAPTQAI). The interval 1–32 (MTVSPTSAPTQAIDTVERAATTPDEPQPFGEL) is disordered. His65 is an active-site residue. The ATP site is built by Tyr68 and Lys112. Glu114 serves as a coordination point for Mg(2+). Substrate-binding positions include 115 to 118 (SHNH) and Arg137. Catalysis depends on His116, which acts as the Proton acceptor. Asp138 serves as a coordination point for Mg(2+). Gln263 contacts substrate. Asp291 serves as a coordination point for Mg(2+). Residue 335–337 (ESQ) coordinates substrate. ATP-binding residues include Asn523 and Gly560. A Mg(2+)-binding site is contributed by Asn561. Residue Ser563 coordinates substrate.

This sequence belongs to the FGAMS family. As to quaternary structure, monomer. Part of the FGAM synthase complex composed of 1 PurL, 1 PurQ and 2 PurS subunits.

Its subcellular location is the cytoplasm. The enzyme catalyses N(2)-formyl-N(1)-(5-phospho-beta-D-ribosyl)glycinamide + L-glutamine + ATP + H2O = 2-formamido-N(1)-(5-O-phospho-beta-D-ribosyl)acetamidine + L-glutamate + ADP + phosphate + H(+). Its pathway is purine metabolism; IMP biosynthesis via de novo pathway; 5-amino-1-(5-phospho-D-ribosyl)imidazole from N(2)-formyl-N(1)-(5-phospho-D-ribosyl)glycinamide: step 1/2. Its function is as follows. Part of the phosphoribosylformylglycinamidine synthase complex involved in the purines biosynthetic pathway. Catalyzes the ATP-dependent conversion of formylglycinamide ribonucleotide (FGAR) and glutamine to yield formylglycinamidine ribonucleotide (FGAM) and glutamate. The FGAM synthase complex is composed of three subunits. PurQ produces an ammonia molecule by converting glutamine to glutamate. PurL transfers the ammonia molecule to FGAR to form FGAM in an ATP-dependent manner. PurS interacts with PurQ and PurL and is thought to assist in the transfer of the ammonia molecule from PurQ to PurL. This Mycobacterium avium (strain 104) protein is Phosphoribosylformylglycinamidine synthase subunit PurL.